The primary structure comprises 374 residues: Chaperone protein DnaJ (374 aa).

In terms of domain architecture, J spans 5 to 70 (DYYEVLGVER…NKRAAYDQYG (66 aa)). Residues 133 to 211 (GTSVNIRVPT…CHGEGRVEEY (79 aa)) form a CR-type zinc finger. Positions 146, 149, 163, 166, 185, 188, 199, and 202 each coordinate Zn(2+). CXXCXGXG motif repeat units lie at residues 146-153 (CKPCDGSG), 163-170 (CPTCGGIG), 185-192 (CPRCHGQG), and 199-206 (CDSCHGEG).

It belongs to the DnaJ family. In terms of assembly, homodimer. The cofactor is Zn(2+).

The protein resides in the cytoplasm. Functionally, participates actively in the response to hyperosmotic and heat shock by preventing the aggregation of stress-denatured proteins and by disaggregating proteins, also in an autonomous, DnaK-independent fashion. Unfolded proteins bind initially to DnaJ; upon interaction with the DnaJ-bound protein, DnaK hydrolyzes its bound ATP, resulting in the formation of a stable complex. GrpE releases ADP from DnaK; ATP binding to DnaK triggers the release of the substrate protein, thus completing the reaction cycle. Several rounds of ATP-dependent interactions between DnaJ, DnaK and GrpE are required for fully efficient folding. Also involved, together with DnaK and GrpE, in the DNA replication of plasmids through activation of initiation proteins. The chain is Chaperone protein DnaJ from Pseudomonas fluorescens (strain SBW25).